The sequence spans 122 residues: Large ribosomal subunit protein uL14c (122 aa).

Belongs to the universal ribosomal protein uL14 family. As to quaternary structure, part of the 50S ribosomal subunit.

The protein resides in the plastid. It is found in the chloroplast. In terms of biological role, binds to 23S rRNA. The chain is Large ribosomal subunit protein uL14c from Nandina domestica (Heavenly bamboo).